Reading from the N-terminus, the 455-residue chain is Acid sphingomyelinase-like phosphodiesterase 3b (455 aa).

The N-terminal stretch at 1–18 (MRLLAWLIFLANWGGARA) is a signal peptide. The Zn(2+) site is built by Asp28 and His30. A disulfide bond links Cys45 and Cys64. N-linked (GlcNAc...) asparagine glycosylation occurs at Asn72. Asp93 and Asn134 together coordinate Zn(2+). N-linked (GlcNAc...) asparagine glycosylation occurs at Asn164. 3 residues coordinate Zn(2+): His236, His277, and His279. Residue Asn343 is glycosylated (N-linked (GlcNAc...) asparagine). 2 cysteine pairs are disulfide-bonded: Cys405–Cys409 and Cys415–Cys428.

It belongs to the acid sphingomyelinase family. Interacts with TLR4, TLR7, TLR8 and TLR9. Zn(2+) serves as cofactor. In terms of processing, N-glycosylated.

It is found in the secreted. It localises to the cell membrane. Functionally, lipid-modulating phosphodiesterase. Active on the surface of macrophages and dendritic cells and strongly influences macrophage lipid composition and membrane fluidity. Acts as a negative regulator of Toll-like receptor signaling. Has in vitro phosphodiesterase activity, but the physiological substrate is unknown. Lacks activity with phosphocholine-containing lipids, but can cleave CDP-choline, and can release phosphate from ATP and ADP (in vitro). The sequence is that of Acid sphingomyelinase-like phosphodiesterase 3b (SMPDL3B) from Homo sapiens (Human).